Consider the following 210-residue polypeptide: Na(+)-translocating NADH-quinone reductase subunit D (210 aa).

Helical transmembrane passes span 42–62 (FVMT…VSLI), 72–92 (IIVQ…VLKA), 103–123 (VFVG…AFAM), 131–151 (LIDG…VGFF), and 178–198 (NGLM…IWVI).

This sequence belongs to the NqrDE/RnfAE family. In terms of assembly, composed of six subunits; NqrA, NqrB, NqrC, NqrD, NqrE and NqrF.

The protein localises to the cell inner membrane. It catalyses the reaction a ubiquinone + n Na(+)(in) + NADH + H(+) = a ubiquinol + n Na(+)(out) + NAD(+). With respect to regulation, this reaction is tightly coupled to the Na(+) pumping activity and specifically requires Na(+) for activity. Inhibited by korormicin and 2-N-heptyl-4-hydroxyquinoline N-oxide (HQNO). NQR complex catalyzes the reduction of ubiquinone-1 to ubiquinol by two successive reactions, coupled with the transport of Na(+) ions from the cytoplasm to the periplasm. NqrA to NqrE are probably involved in the second step, the conversion of ubisemiquinone to ubiquinol. In Vibrio alginolyticus, this protein is Na(+)-translocating NADH-quinone reductase subunit D.